A 467-amino-acid chain; its full sequence is Dihydrolipoyl dehydrogenase (467 aa).

FAD-binding positions include E33–C41, K50, and G113. C41 and C46 are oxidised to a cystine. NAD(+) contacts are provided by residues G181–I185, E204, and A269–F272. 2 residues coordinate FAD: D312 and A320. The active-site Proton acceptor is the H446.

It belongs to the class-I pyridine nucleotide-disulfide oxidoreductase family. In terms of assembly, homodimer. Part of the PDH complex, consisting of multiple copies of AceE (E1), DlaT (E2) and Lpd (E3), and of the BCKADH complex, consisting of multiple copies of BkdA/BkdB (E1), BkdC (E2) and Lpd (E3). FAD is required as a cofactor.

The protein resides in the cytoplasm. The enzyme catalyses N(6)-[(R)-dihydrolipoyl]-L-lysyl-[protein] + NAD(+) = N(6)-[(R)-lipoyl]-L-lysyl-[protein] + NADH + H(+). Functionally, lipoamide dehydrogenase is a component of the alpha-ketoacid dehydrogenase complexes. Catalyzes the reoxidation of dihydrolipoyl groups which are covalently attached to the lipoate acyltransferase components (E2) of the complexes. The sequence is that of Dihydrolipoyl dehydrogenase (lpd) from Mycobacterium leprae (strain TN).